The sequence spans 87 residues: Large ribosomal subunit protein bL27 (87 aa).

This sequence belongs to the bacterial ribosomal protein bL27 family.

This chain is Large ribosomal subunit protein bL27, found in Dechloromonas aromatica (strain RCB).